A 386-amino-acid polypeptide reads, in one-letter code: Succinate--CoA ligase [ADP-forming] subunit beta (386 aa).

Positions 9-244 (KDLLASYDVP…PSQENVRDVL (236 aa)) constitute an ATP-grasp domain. ATP contacts are provided by residues K46, 53 to 55 (GRG), V102, and E107. The Mg(2+) site is built by N199 and D213. Substrate is bound by residues N264 and 321 to 323 (GIM).

Belongs to the succinate/malate CoA ligase beta subunit family. Heterotetramer of two alpha and two beta subunits. It depends on Mg(2+) as a cofactor.

The enzyme catalyses succinate + ATP + CoA = succinyl-CoA + ADP + phosphate. It carries out the reaction GTP + succinate + CoA = succinyl-CoA + GDP + phosphate. Its pathway is carbohydrate metabolism; tricarboxylic acid cycle; succinate from succinyl-CoA (ligase route): step 1/1. Succinyl-CoA synthetase functions in the citric acid cycle (TCA), coupling the hydrolysis of succinyl-CoA to the synthesis of either ATP or GTP and thus represents the only step of substrate-level phosphorylation in the TCA. The beta subunit provides nucleotide specificity of the enzyme and binds the substrate succinate, while the binding sites for coenzyme A and phosphate are found in the alpha subunit. This chain is Succinate--CoA ligase [ADP-forming] subunit beta, found in Chlamydia pneumoniae (Chlamydophila pneumoniae).